The primary structure comprises 310 residues: HPr kinase/phosphorylase (310 aa).

Residues H138 and K159 contribute to the active site. 153–160 (GASGIGKS) contributes to the ATP binding site. S160 contributes to the Mg(2+) binding site. D177 (proton acceptor; for phosphorylation activity. Proton donor; for dephosphorylation activity) is an active-site residue. Residues 201–210 (IEIRGVGIID) are important for the catalytic mechanism of both phosphorylation and dephosphorylation. E202 serves as a coordination point for Mg(2+). R243 is an active-site residue. The segment at 264-269 (PVKTGR) is important for the catalytic mechanism of dephosphorylation.

This sequence belongs to the HPrK/P family. As to quaternary structure, homohexamer. Mg(2+) serves as cofactor.

The enzyme catalyses [HPr protein]-L-serine + ATP = [HPr protein]-O-phospho-L-serine + ADP + H(+). It catalyses the reaction [HPr protein]-O-phospho-L-serine + phosphate + H(+) = [HPr protein]-L-serine + diphosphate. Catalyzes the ATP- as well as the pyrophosphate-dependent phosphorylation of a specific serine residue in HPr, a phosphocarrier protein of the phosphoenolpyruvate-dependent sugar phosphotransferase system (PTS). HprK/P also catalyzes the pyrophosphate-producing, inorganic phosphate-dependent dephosphorylation (phosphorolysis) of seryl-phosphorylated HPr (P-Ser-HPr). The two antagonistic activities of HprK/P are regulated by several intracellular metabolites, which change their concentration in response to the absence or presence of rapidly metabolisable carbon sources (glucose, fructose, etc.) in the growth medium. Therefore, by controlling the phosphorylation state of HPr, HPrK/P is a sensor enzyme that plays a major role in the regulation of carbon metabolism and sugar transport: it mediates carbon catabolite repression (CCR), and regulates PTS-catalyzed carbohydrate uptake and inducer exclusion. The sequence is that of HPr kinase/phosphorylase from Lactococcus lactis subsp. cremoris (strain SK11).